The following is a 662-amino-acid chain: PAN2-PAN3 deadenylation complex subunit PAN3 (662 aa).

2 disordered regions span residues 1–26 (MASA…AREN) and 59–131 (TTYQ…RAET). The C3H1-type zinc finger occupies 26-55 (NAKDTLCRNVTIYGRCRYEDKGCAFNHDPH). Polar residues predominate over residues 72-85 (DSPSFTPSLLSSNG). Over residues 86 to 102 (SSPTTASVTAKKAATIS) the composition is skewed to low complexity. The segment covering 114–126 (RNITSRSNTSTPS) has biased composition (polar residues). The segment at 265–525 (QTLPNTQLPA…NIDIFITGIS (261 aa)) is pseudokinase domain. Residues Arg317, 366-373 (DYHPLSKT), and 425-426 (SK) contribute to the ATP site. Residues 526-564 (SQLMSTFDSALHLDDELTSDLSRELENGRLVRLVTKLNF) adopt a coiled-coil conformation. The interval 565–662 (VNERPEYEHD…ALLKPTRRLH (98 aa)) is knob domain.

This sequence belongs to the protein kinase superfamily. PAN3 family. As to quaternary structure, homodimer. Forms a heterotrimer with a catalytic subunit pan2 to form the poly(A)-nuclease (PAN) deadenylation complex. Interacts (via PAM-2 motif) with poly(A)-binding protein pab1 (via PABC domain), conferring substrate specificity of the enzyme complex.

Its subcellular location is the cytoplasm. Regulatory subunit of the poly(A)-nuclease (PAN) deadenylation complex, one of two cytoplasmic mRNA deadenylases involved in mRNA turnover. PAN specifically shortens poly(A) tails of RNA and the activity is stimulated by poly(A)-binding protein pab1. PAN deadenylation is followed by rapid degradation of the shortened mRNA tails by the CCR4-NOT complex. Deadenylated mRNAs are then degraded by two alternative mechanisms, namely exosome-mediated 3'-5' exonucleolytic degradation, or deadenylation-dependent mRNA decaping and subsequent 5'-3' exonucleolytic degradation by xrn1. May also be involved in post-transcriptional maturation of mRNA poly(A) tails. pan3 acts as a positive regulator for PAN activity, recruiting the catalytic subunit pan2 to mRNA via its interaction with RNA and with pab1. The chain is PAN2-PAN3 deadenylation complex subunit PAN3 from Aspergillus oryzae (strain ATCC 42149 / RIB 40) (Yellow koji mold).